A 396-amino-acid chain; its full sequence is Large ribosomal subunit protein uL4A (396 aa).

Over residues 352–373 (KAKEKKPDDGKPKAKKPLDAKT) the composition is skewed to basic and acidic residues. The tract at residues 352–374 (KAKEKKPDDGKPKAKKPLDAKTK) is disordered.

The protein belongs to the universal ribosomal protein uL4 family. Component of the large ribosomal subunit.

Its subcellular location is the cytoplasm. In terms of biological role, component of the large ribosomal subunit. The ribosome is a large ribonucleoprotein complex responsible for the synthesis of proteins in the cell. This Xenopus laevis (African clawed frog) protein is Large ribosomal subunit protein uL4A (rpl4-a).